The sequence spans 642 residues: Threonine--tRNA ligase (642 aa).

Residues 1-61 form the TGS domain; it reads MPVITLPDGS…ENDATLAIIT (61 aa). Residues 243–534 are catalytic; that stretch reads DHRKIGKQLD…LTEEFAGFFP (292 aa). Cys-334, His-385, and His-511 together coordinate Zn(2+).

This sequence belongs to the class-II aminoacyl-tRNA synthetase family. Homodimer. Requires Zn(2+) as cofactor.

Its subcellular location is the cytoplasm. It catalyses the reaction tRNA(Thr) + L-threonine + ATP = L-threonyl-tRNA(Thr) + AMP + diphosphate + H(+). In terms of biological role, catalyzes the attachment of threonine to tRNA(Thr) in a two-step reaction: L-threonine is first activated by ATP to form Thr-AMP and then transferred to the acceptor end of tRNA(Thr). Also edits incorrectly charged L-seryl-tRNA(Thr). This is Threonine--tRNA ligase from Salmonella dublin (strain CT_02021853).